Reading from the N-terminus, the 492-residue chain is Solute carrier family 2, facilitated glucose transporter member 1 (492 aa).

Methionine 1 bears the N-acetylmethionine mark. Residues 1-11 (MEPSSKKVTGR) are Cytoplasmic-facing. Residues 12 to 33 (LMLAVGGAVLGSLQFGYNTGVI) form a helical membrane-spanning segment. Residues 34–66 (NAPQKVIEEFYNQTWIHRYGERILPTTLTTLWS) lie on the Extracellular side of the membrane. Asparagine 45 is a glycosylation site (N-linked (GlcNAc...) asparagine). A helical transmembrane segment spans residues 67 to 87 (LSVAIFSVGGMIGSFSVGLFV). The Cytoplasmic portion of the chain corresponds to 88–90 (NRF). The chain crosses the membrane as a helical span at residues 91–112 (GRRNSMLMMNLLAFVSAVLMGF). Residues 113 to 120 (SKLAKSFE) are Extracellular-facing. Residues 121-144 (MLILGRFIIGVYCGLTTGFVPMYV) form a helical membrane-spanning segment. At 145 to 155 (GEVSPTALRGA) the chain is on the cytoplasmic side. A helical transmembrane segment spans residues 156–176 (LGTLHQLGIVVGILIAQVFGL). Glutamine 161 is a binding site for D-glucose. Topologically, residues 177–185 (DSIMGNEDL) are extracellular. A helical membrane pass occupies residues 186-206 (WPLLLSVIFVPALLQCIVLPL). The Cytoplasmic segment spans residues 207–271 (CPESPRFLLI…LFRSPAYRQP (65 aa)). Residue serine 226 is modified to Phosphoserine. The chain crosses the membrane as a helical span at residues 272–293 (ILSAVVLQLSQQLSGINAVFYY). D-glucose is bound by residues 282-283 (QQ) and asparagine 288. Over 294–306 (STSIFEKAGVQQP) the chain is Extracellular. Residues 307 to 328 (VYATIGSGIVNTAFTVVSLFVV) form a helical membrane-spanning segment. Asparagine 317 is a D-glucose binding site. Residues 329-334 (ERAGRR) are Cytoplasmic-facing. The helical transmembrane segment at 335–355 (TLHLIGLAGMAACAVLMTIAL) threads the bilayer. Topologically, residues 356–365 (ALLEQLPWMS) are extracellular. The chain crosses the membrane as a helical span at residues 366 to 388 (YLSIVAIFGFVAFFEVGPGPIPW). Glutamate 380 and tryptophan 388 together coordinate D-glucose. Residues 389–401 (FIVAELFSQGPRP) lie on the Cytoplasmic side of the membrane. A helical membrane pass occupies residues 402–422 (AAVAVAGFSNWTSNFIVGMCF). Residues 423–429 (QYVEQLC) lie on the Extracellular side of the membrane. A helical transmembrane segment spans residues 430–450 (GPYVFIIFTVLLVLFFIFTYF). Topologically, residues 451–492 (KVPETKGRTFDEIASGFRQGGASQSDKTPEELFHPLGADSQV) are cytoplasmic. Serine 465 carries the phosphoserine modification. The segment at 468 to 492 (RQGGASQSDKTPEELFHPLGADSQV) is disordered. Residue threonine 478 is modified to Phosphothreonine. Residue serine 490 is modified to Phosphoserine.

This sequence belongs to the major facilitator superfamily. Sugar transporter (TC 2.A.1.1) family. Glucose transporter subfamily. Found in a complex with ADD2, DMTN and SLC2A1. Interacts (via C-terminus cytoplasmic region) with DMTN. Interacts with SNX27; the interaction is required when endocytosed to prevent degradation in lysosomes and promote recycling to the plasma membrane. Interacts with GIPC (via PDZ domain). Interacts with STOM. Interacts with SGTA (via Gln-rich region). Interacts with BSG. Interacts with SMIM43; the interaction may promote SLC2A1-mediated glucose transport to meet the energy needs of mesendoderm differentiation. Post-translationally, phosphorylation at Ser-226 by PKC promotes glucose uptake by increasing cell membrane localization.

It localises to the cell membrane. The protein localises to the photoreceptor inner segment. The catalysed reaction is D-glucose(out) = D-glucose(in). The uptake of glucose is inhibited by cytochalasin B. Glucose uptake is increased in response to phorbol ester 12-O-tetradecanoylphorbol-13-acetate (TPA) treatment: TPA-induced glucose uptake requires phosphorylation at Ser-226. In terms of biological role, facilitative glucose transporter, which is responsible for constitutive or basal glucose uptake. Has a very broad substrate specificity; can transport a wide range of aldoses including both pentoses and hexoses. Most important energy carrier of the brain: present at the blood-brain barrier and assures the energy-independent, facilitative transport of glucose into the brain. In association with BSG and NXNL1, promotes retinal cone survival by increasing glucose uptake into photoreceptors. Required for mesendoderm differentiation. The chain is Solute carrier family 2, facilitated glucose transporter member 1 from Oryctolagus cuniculus (Rabbit).